A 307-amino-acid chain; its full sequence is Golgi to ER traffic protein 2 (307 aa).

The Cytoplasmic portion of the chain corresponds to 1 to 173; the sequence is MSDSTDSPAV…QAYDTYQQKL (173 aa). The span at 41 to 52 shows a compositional bias: polar residues; the sequence is LSQGSSVKTTGV. The disordered stretch occupies residues 41–73; sequence LSQGSSVKTTGVKSVLDEPQPTATSSAIHDEDP. A helical membrane pass occupies residues 174–194; the sequence is WKSRFLVIRVVVTLFNFFYHY. Residues 195 to 220 are Lumenal-facing; it reads LNVPSFHASNYSYVRDLAQDEFPVRN. A helical transmembrane segment spans residues 221–240; sequence FFTWFAAFEVIIVLQYYTVF. Topologically, residues 241–284 are cytoplasmic; sequence HKLGLFHAANQNSMIMKLMSMGSMVLPQLNTYQPLVARFLGYYE. The chain crosses the membrane as a helical span at residues 285 to 305; that stretch reads LFGIIFGDLSLVIVLFGLLSF. Topologically, residues 306–307 are lumenal; that stretch reads TK.

Belongs to the GET2 family. As to quaternary structure, component of the Golgi to ER traffic (GET) complex, which is composed of GET1, GET2 and GET3. Within the complex, GET1 and GET2 form a heterotetramer which is stabilized by phosphatidylinositol binding and which binds to the GET3 homodimer.

Its subcellular location is the endoplasmic reticulum membrane. The protein localises to the golgi apparatus membrane. In terms of biological role, required for the post-translational delivery of tail-anchored (TA) proteins to the endoplasmic reticulum. Together with GET1, acts as a membrane receptor for soluble GET3, which recognizes and selectively binds the transmembrane domain of TA proteins in the cytosol. The GET complex cooperates with the HDEL receptor ERD2 to mediate the ATP-dependent retrieval of resident ER proteins that contain a C-terminal H-D-E-L retention signal from the Golgi to the ER. The protein is Golgi to ER traffic protein 2 of Candida tropicalis (strain ATCC MYA-3404 / T1) (Yeast).